The primary structure comprises 177 residues: MSRVAKAPVAVPAGVQVTLNGQLLTVKGKNGELSREIHNAVEVKYEADTLTFAPKAGIVNADAQAGTARALVNAMVIGVTEGFTKKLQLVGVGYRAQMKGNTVALNLGFSHSVEHELPAGVTGECPSQTEIILKSADKQLIGQVAADIRAYRKPEPYKGKGVRYADEVVRIKEAKKK.

This sequence belongs to the universal ribosomal protein uL6 family. Part of the 50S ribosomal subunit.

In terms of biological role, this protein binds to the 23S rRNA, and is important in its secondary structure. It is located near the subunit interface in the base of the L7/L12 stalk, and near the tRNA binding site of the peptidyltransferase center. This chain is Large ribosomal subunit protein uL6, found in Glaesserella parasuis serovar 5 (strain SH0165) (Haemophilus parasuis).